The following is a 1340-amino-acid chain: DNA-directed RNA polymerase subunit beta (1340 aa).

It belongs to the RNA polymerase beta chain family. In terms of assembly, the RNAP catalytic core consists of 2 alpha, 1 beta, 1 beta' and 1 omega subunit. When a sigma factor is associated with the core the holoenzyme is formed, which can initiate transcription.

It carries out the reaction RNA(n) + a ribonucleoside 5'-triphosphate = RNA(n+1) + diphosphate. In terms of biological role, DNA-dependent RNA polymerase catalyzes the transcription of DNA into RNA using the four ribonucleoside triphosphates as substrates. This Baumannia cicadellinicola subsp. Homalodisca coagulata protein is DNA-directed RNA polymerase subunit beta.